Here is a 396-residue protein sequence, read N- to C-terminus: Acetate kinase (396 aa).

N8 contacts Mg(2+). An ATP-binding site is contributed by K15. Position 89 (R89) interacts with substrate. The active-site Proton donor/acceptor is the D146. ATP is bound by residues 206-210 (HIGNG), 283-285 (DMR), and 331-335 (GIGEN). E383 contributes to the Mg(2+) binding site.

This sequence belongs to the acetokinase family. In terms of assembly, homodimer. Mg(2+) is required as a cofactor. It depends on Mn(2+) as a cofactor.

It is found in the cytoplasm. It carries out the reaction acetate + ATP = acetyl phosphate + ADP. It participates in metabolic intermediate biosynthesis; acetyl-CoA biosynthesis; acetyl-CoA from acetate: step 1/2. Functionally, catalyzes the formation of acetyl phosphate from acetate and ATP. Can also catalyze the reverse reaction. This is Acetate kinase from Streptococcus gordonii (strain Challis / ATCC 35105 / BCRC 15272 / CH1 / DL1 / V288).